Reading from the N-terminus, the 83-residue chain is Putative membrane protein insertion efficiency factor (83 aa).

Positions 63 to 83 are disordered; sequence GGNDPVPDHFSLRRNKTDISD. Residues 68–83 show a composition bias toward basic and acidic residues; sequence VPDHFSLRRNKTDISD.

Belongs to the UPF0161 family.

It localises to the cell membrane. Functionally, could be involved in insertion of integral membrane proteins into the membrane. The sequence is that of Putative membrane protein insertion efficiency factor from Streptococcus agalactiae serotype III (strain NEM316).